The chain runs to 217 residues: Somatotropin (217 aa).

A signal peptide spans 1-26 (MMAAGPRTSLLLAFALLCLPWTQVVG). His46 provides a ligand contact to Zn(2+). Residues Cys79 and Cys190 are joined by a disulfide bond. Residue Ser132 is modified to Phosphoserine. Zn(2+) is bound at residue Glu199. Residues Cys207 and Cys215 are joined by a disulfide bond.

The protein belongs to the somatotropin/prolactin family.

It is found in the secreted. In terms of biological role, plays an important role in growth control. Its major role in stimulating body growth is to stimulate the liver and other tissues to secrete IGF1. It stimulates both the differentiation and proliferation of myoblasts. It also stimulates amino acid uptake and protein synthesis in muscle and other tissues. The chain is Somatotropin (GH1) from Bubalus bubalis (Domestic water buffalo).